The sequence spans 155 residues: Pre-hexon-linking protein VIII (155 aa).

A propeptide spanning residues 44–84 (GVHRTKDIKPEDLVGRGIQLNSYQPPTTRLKPERVFQLAGG) is cleaved from the precursor.

Belongs to the adenoviridae hexon-linking protein family. As to quaternary structure, interacts with the peripentonal hexons as well as the hexons in the facets. Part of a complex composed of the core-capsid bridging protein, the endosome lysis protein VI and the hexon-linking protein VIII; these interactions bridge the virus core to the capsid. In terms of processing, cleaved by the viral protease during virion maturation. May cause the middle segment to be shed from the capsid.

It is found in the virion. The protein resides in the host nucleus. Structural component of the virion that acts as a cement protein on the capsid interior and which glue the peripentonal hexons and group-of-nine hexons together. The sequence is that of Pre-hexon-linking protein VIII from Bos taurus (Bovine).